The following is a 669-amino-acid chain: DNA ligase (669 aa).

Residues 34 to 38 (DAEYD), 83 to 84 (SL), and glutamate 114 contribute to the NAD(+) site. Residue lysine 116 is the N6-AMP-lysine intermediate of the active site. 4 residues coordinate NAD(+): arginine 137, glutamate 171, lysine 287, and lysine 311. Zn(2+) is bound by residues cysteine 405, cysteine 408, cysteine 423, and cysteine 428. In terms of domain architecture, BRCT spans 591–669 (NVESYFAGKT…EERFLQELNK (79 aa)).

The protein belongs to the NAD-dependent DNA ligase family. LigA subfamily. Requires Mg(2+) as cofactor. Mn(2+) is required as a cofactor.

It carries out the reaction NAD(+) + (deoxyribonucleotide)n-3'-hydroxyl + 5'-phospho-(deoxyribonucleotide)m = (deoxyribonucleotide)n+m + AMP + beta-nicotinamide D-nucleotide.. Functionally, DNA ligase that catalyzes the formation of phosphodiester linkages between 5'-phosphoryl and 3'-hydroxyl groups in double-stranded DNA using NAD as a coenzyme and as the energy source for the reaction. It is essential for DNA replication and repair of damaged DNA. The chain is DNA ligase from Bacillus cereus (strain AH820).